The primary structure comprises 369 residues: 3 beta-hydroxysteroid dehydrogenase type 7 (369 aa).

Tyr-159 acts as the Proton acceptor in catalysis. Lys-163 lines the NAD(+) pocket. Transmembrane regions (helical) follow at residues 289-309 (LLPYWLLVLLATLNALLQWLL) and 312-334 (LVLYTPLLNPYTLAMANTTFTVS).

The protein belongs to the 3-beta-HSD family. As to expression, predominantly expressed in liver.

It is found in the endoplasmic reticulum membrane. It carries out the reaction 7alpha-hydroxycholesterol + NAD(+) = 7alpha-hydroxycholest-4-en-3-one + NADH + H(+). The catalysed reaction is 7alpha,25-dihydroxycholesterol + NAD(+) = 7alpha,25-dihydroxy-4-cholesten-3-one + NADH + H(+). It catalyses the reaction (25R)-cholest-5-en-3beta,7alpha,26-triol + NAD(+) = (25R)-7alpha,26-dihydroxycholest-4-en-3-one + NADH + H(+). The enzyme catalyses (24S)-7alpha-dihydroxycholesterol + NAD(+) = (24S)-7alpha,24-dihydroxycholest-4-en-3-one + NADH + H(+). It functions in the pathway lipid metabolism; steroid biosynthesis. The 3-beta-HSD enzymatic system plays a crucial role in the biosynthesis of all classes of hormonal steroids. HSD VII is active against four 7-alpha-hydroxylated sterols. Does not metabolize several different C(19/21) steroids as substrates. Involved in bile acid synthesis. Plays a key role in cell positioning and movement in lymphoid tissues by mediating degradation of 7-alpha,25-dihydroxycholesterol (7-alpha,25-OHC): 7-alpha,25-OHC acts as a ligand for the G protein-coupled receptor GPR183/EBI2, a chemotactic receptor for a number of lymphoid cells. This Mus musculus (Mouse) protein is 3 beta-hydroxysteroid dehydrogenase type 7.